The primary structure comprises 315 residues: tRNA uridine(34) hydroxylase (315 aa).

In terms of domain architecture, Rhodanese spans 145–235; sequence MKNDFILVDM…GIIEYVNFIK (91 aa). C199 serves as the catalytic Cysteine persulfide intermediate.

The protein belongs to the TrhO family.

It carries out the reaction uridine(34) in tRNA + AH2 + O2 = 5-hydroxyuridine(34) in tRNA + A + H2O. In terms of biological role, catalyzes oxygen-dependent 5-hydroxyuridine (ho5U) modification at position 34 in tRNAs. The chain is tRNA uridine(34) hydroxylase from Wigglesworthia glossinidia brevipalpis.